Consider the following 155-residue polypeptide: Large ribosomal subunit protein eL24 (155 aa).

Basic and acidic residues predominate over residues 98-129 (PEVRKAKRDDKAKADKEKKKADKAARKAEKAK). The segment at 98-155 (PEVRKAKRDDKAKADKEKKKADKAARKAEKAKLAAAQGSKVSKQQAKGAFQKVAATSR) is disordered.

Belongs to the eukaryotic ribosomal protein eL24 family.

The protein is Large ribosomal subunit protein eL24 (RPL24) of Candida glabrata (strain ATCC 2001 / BCRC 20586 / JCM 3761 / NBRC 0622 / NRRL Y-65 / CBS 138) (Yeast).